A 554-amino-acid polypeptide reads, in one-letter code: Probable urocanate hydratase (554 aa).

Residues 49–50 (GG), Gln127, Glu194, 240–241 (NA), 261–265 (QTAAH), 271–272 (YI), and Tyr320 each bind NAD(+). The active site involves Cys408. Gly490 is a binding site for NAD(+).

This sequence belongs to the urocanase family. It depends on NAD(+) as a cofactor.

Its subcellular location is the cytoplasm. The enzyme catalyses 4-imidazolone-5-propanoate = trans-urocanate + H2O. It participates in amino-acid degradation; L-histidine degradation into L-glutamate; N-formimidoyl-L-glutamate from L-histidine: step 2/3. Catalyzes the conversion of urocanate to 4-imidazolone-5-propionate. The protein is Probable urocanate hydratase of Thermoplasma acidophilum (strain ATCC 25905 / DSM 1728 / JCM 9062 / NBRC 15155 / AMRC-C165).